The primary structure comprises 85 residues: Protein MANBAL (85 aa).

A helical membrane pass occupies residues 24–44 (YGLFLGAIFQLICVLAIIVPI). The span at 49-64 (EAEAEQAEPRSAEGPK) shows a compositional bias: basic and acidic residues. The segment at 49–85 (EAEAEQAEPRSAEGPKKPKAAIASTNKRPKKETKKKR) is disordered. Residues 75-85 (KRPKKETKKKR) are compositionally biased toward basic residues.

It belongs to the UPF0239 family.

It is found in the membrane. The chain is Protein MANBAL (Manbal) from Mus musculus (Mouse).